The primary structure comprises 236 residues: Sugar fermentation stimulation protein homolog (236 aa).

This sequence belongs to the SfsA family.

This Gloeobacter violaceus (strain ATCC 29082 / PCC 7421) protein is Sugar fermentation stimulation protein homolog.